A 225-amino-acid polypeptide reads, in one-letter code: Phosphoribosylformylglycinamidine synthase subunit PurQ (225 aa).

A Glutamine amidotransferase type-1 domain is found at 4–225 (RVGVITFPGT…YSVLDSVISA (222 aa)). Cysteine 87 acts as the Nucleophile in catalysis. Catalysis depends on residues histidine 196 and glutamate 198.

As to quaternary structure, part of the FGAM synthase complex composed of 1 PurL, 1 PurQ and 2 PurS subunits.

The protein localises to the cytoplasm. The enzyme catalyses N(2)-formyl-N(1)-(5-phospho-beta-D-ribosyl)glycinamide + L-glutamine + ATP + H2O = 2-formamido-N(1)-(5-O-phospho-beta-D-ribosyl)acetamidine + L-glutamate + ADP + phosphate + H(+). The catalysed reaction is L-glutamine + H2O = L-glutamate + NH4(+). It functions in the pathway purine metabolism; IMP biosynthesis via de novo pathway; 5-amino-1-(5-phospho-D-ribosyl)imidazole from N(2)-formyl-N(1)-(5-phospho-D-ribosyl)glycinamide: step 1/2. Functionally, part of the phosphoribosylformylglycinamidine synthase complex involved in the purines biosynthetic pathway. Catalyzes the ATP-dependent conversion of formylglycinamide ribonucleotide (FGAR) and glutamine to yield formylglycinamidine ribonucleotide (FGAM) and glutamate. The FGAM synthase complex is composed of three subunits. PurQ produces an ammonia molecule by converting glutamine to glutamate. PurL transfers the ammonia molecule to FGAR to form FGAM in an ATP-dependent manner. PurS interacts with PurQ and PurL and is thought to assist in the transfer of the ammonia molecule from PurQ to PurL. This chain is Phosphoribosylformylglycinamidine synthase subunit PurQ, found in Rhodococcus jostii (strain RHA1).